The following is a 492-amino-acid chain: UPF0652 protein C22H10.08 (492 aa).

It belongs to the UPF0652 family.

It is found in the cytoplasm. It localises to the nucleus. The chain is UPF0652 protein C22H10.08 from Schizosaccharomyces pombe (strain 972 / ATCC 24843) (Fission yeast).